The following is a 220-amino-acid chain: tRNA (guanine-N(7)-)-methyltransferase (220 aa).

3 residues coordinate S-adenosyl-L-methionine: Glu-42, Glu-67, and Asp-122. Asp-122 is a catalytic residue. Substrate is bound by residues Lys-126, Asp-158, and Thr-198–Glu-201.

The protein belongs to the class I-like SAM-binding methyltransferase superfamily. TrmB family.

It catalyses the reaction guanosine(46) in tRNA + S-adenosyl-L-methionine = N(7)-methylguanosine(46) in tRNA + S-adenosyl-L-homocysteine. Its pathway is tRNA modification; N(7)-methylguanine-tRNA biosynthesis. In terms of biological role, catalyzes the formation of N(7)-methylguanine at position 46 (m7G46) in tRNA. The chain is tRNA (guanine-N(7)-)-methyltransferase from Mycoplasma capricolum subsp. capricolum (strain California kid / ATCC 27343 / NCTC 10154).